Consider the following 429-residue polypeptide: 3-phosphoshikimate 1-carboxyvinyltransferase (429 aa).

Positions 23, 24, and 28 each coordinate 3-phosphoshikimate. K23 contacts phosphoenolpyruvate. Phosphoenolpyruvate-binding residues include G95 and R123. The 3-phosphoshikimate site is built by S168, Q170, D316, and K343. Q170 provides a ligand contact to phosphoenolpyruvate. D316 serves as the catalytic Proton acceptor. Residues R347 and R389 each coordinate phosphoenolpyruvate.

This sequence belongs to the EPSP synthase family. In terms of assembly, monomer.

The protein localises to the cytoplasm. The enzyme catalyses 3-phosphoshikimate + phosphoenolpyruvate = 5-O-(1-carboxyvinyl)-3-phosphoshikimate + phosphate. The protein operates within metabolic intermediate biosynthesis; chorismate biosynthesis; chorismate from D-erythrose 4-phosphate and phosphoenolpyruvate: step 6/7. Its function is as follows. Catalyzes the transfer of the enolpyruvyl moiety of phosphoenolpyruvate (PEP) to the 5-hydroxyl of shikimate-3-phosphate (S3P) to produce enolpyruvyl shikimate-3-phosphate and inorganic phosphate. The chain is 3-phosphoshikimate 1-carboxyvinyltransferase from Oceanobacillus iheyensis (strain DSM 14371 / CIP 107618 / JCM 11309 / KCTC 3954 / HTE831).